A 576-amino-acid chain; its full sequence is Putative export ATP-binding/permease protein RP696 (576 aa).

The ABC transmembrane type-1 domain occupies 20 to 303; that stretch reads LIIVMISLLS…IFELLSEMHL (284 aa). 6 consecutive transmembrane segments (helical) span residues 21-41, 61-81, 135-155, 158-178, 242-262, and 277-297; these read IIVM…GSIF, ILYI…RSYF, FLSF…LMFF, FKLA…LIKF, ALFF…IVWI, and IISF…IFEL. The ABC transporter domain maps to 336 to 572; that stretch reads IEFKNVDFTY…SEIYRNICRE (237 aa). Residue 371–378 participates in ATP binding; sequence GRSGAGKS.

This sequence belongs to the ABC transporter superfamily. Homodimer.

The protein resides in the cell inner membrane. Part of an ABC transporter complex. Transmembrane domains (TMD) form a pore in the inner membrane and the ATP-binding domain (NBD) is responsible for energy generation. This is Putative export ATP-binding/permease protein RP696 from Rickettsia prowazekii (strain Madrid E).